We begin with the raw amino-acid sequence, 214 residues long: Probable transaldolase (214 aa).

Lys-83 functions as the Schiff-base intermediate with substrate in the catalytic mechanism.

Belongs to the transaldolase family. Type 3B subfamily.

The protein resides in the cytoplasm. It carries out the reaction D-sedoheptulose 7-phosphate + D-glyceraldehyde 3-phosphate = D-erythrose 4-phosphate + beta-D-fructose 6-phosphate. Its pathway is carbohydrate degradation; pentose phosphate pathway; D-glyceraldehyde 3-phosphate and beta-D-fructose 6-phosphate from D-ribose 5-phosphate and D-xylulose 5-phosphate (non-oxidative stage): step 2/3. Transaldolase is important for the balance of metabolites in the pentose-phosphate pathway. The polypeptide is Probable transaldolase (Geobacter sulfurreducens (strain ATCC 51573 / DSM 12127 / PCA)).